The sequence spans 437 residues: Ankyrin repeat domain-containing protein OPG015 (437 aa).

ANK repeat units lie at residues 117-146 (QDLL…VIYK), 220-249 (GGRT…NVNA), and 253-290 (NGYT…SIDC).

This sequence belongs to the orthopoxvirus OPG015 family.

Its function is as follows. May be involved in virus-host protein interaction through the ankyrin repeats. This Monkeypox virus protein is Ankyrin repeat domain-containing protein OPG015 (OPG015).